A 76-amino-acid chain; its full sequence is U1-cyrtautoxin-As1d (76 aa).

4 disulfide bridges follow: cysteine 23–cysteine 37, cysteine 30–cysteine 51, cysteine 36–cysteine 66, and cysteine 69–cysteine 76.

It belongs to the neurotoxin 21 family. Expressed by the venom gland.

It is found in the secreted. In terms of biological role, neurotoxin with probable ion channel impairing activity. In vivo, is both paralytic and lethal, when injected into lepidopteran larvae. This is U1-cyrtautoxin-As1d from Apomastus schlingeri (Trap-door spider).